A 342-amino-acid chain; its full sequence is Putative aryl-alcohol dehydrogenase AAD16 (342 aa).

Belongs to the aldo/keto reductase family. Aldo/keto reductase 2 subfamily.

Putative aryl-alcohol dehydrogenase. The protein is Putative aryl-alcohol dehydrogenase AAD16 of Saccharomyces cerevisiae (strain ATCC 204508 / S288c) (Baker's yeast).